We begin with the raw amino-acid sequence, 204 residues long: High frequency lysogenization protein HflD homolog (204 aa).

It belongs to the HflD family.

The protein resides in the cytoplasm. Its subcellular location is the cell inner membrane. The protein is High frequency lysogenization protein HflD homolog of Shewanella sediminis (strain HAW-EB3).